A 618-amino-acid chain; its full sequence is Proline--tRNA ligase (618 aa).

It belongs to the class-II aminoacyl-tRNA synthetase family. ProS type 1 subfamily. In terms of assembly, homodimer.

It localises to the cytoplasm. The catalysed reaction is tRNA(Pro) + L-proline + ATP = L-prolyl-tRNA(Pro) + AMP + diphosphate. Functionally, catalyzes the attachment of proline to tRNA(Pro) in a two-step reaction: proline is first activated by ATP to form Pro-AMP and then transferred to the acceptor end of tRNA(Pro). As ProRS can inadvertently accommodate and process non-cognate amino acids such as alanine and cysteine, to avoid such errors it has two additional distinct editing activities against alanine. One activity is designated as 'pretransfer' editing and involves the tRNA(Pro)-independent hydrolysis of activated Ala-AMP. The other activity is designated 'posttransfer' editing and involves deacylation of mischarged Ala-tRNA(Pro). The misacylated Cys-tRNA(Pro) is not edited by ProRS. The polypeptide is Proline--tRNA ligase (Streptococcus pyogenes serotype M4 (strain MGAS10750)).